Reading from the N-terminus, the 232-residue chain is 5'-methylthioadenosine/S-adenosylhomocysteine nucleosidase (232 aa).

Glu12 functions as the Proton acceptor in the catalytic mechanism. Substrate is bound by residues Gly78, Ile152, and 173-174 (ME). The active-site Proton donor is Asp197.

Belongs to the PNP/UDP phosphorylase family. MtnN subfamily. As to quaternary structure, homodimer.

It carries out the reaction S-adenosyl-L-homocysteine + H2O = S-(5-deoxy-D-ribos-5-yl)-L-homocysteine + adenine. The catalysed reaction is S-methyl-5'-thioadenosine + H2O = 5-(methylsulfanyl)-D-ribose + adenine. It catalyses the reaction 5'-deoxyadenosine + H2O = 5-deoxy-D-ribose + adenine. Its pathway is amino-acid biosynthesis; L-methionine biosynthesis via salvage pathway; S-methyl-5-thio-alpha-D-ribose 1-phosphate from S-methyl-5'-thioadenosine (hydrolase route): step 1/2. Its function is as follows. Catalyzes the irreversible cleavage of the glycosidic bond in both 5'-methylthioadenosine (MTA) and S-adenosylhomocysteine (SAH/AdoHcy) to adenine and the corresponding thioribose, 5'-methylthioribose and S-ribosylhomocysteine, respectively. Also cleaves 5'-deoxyadenosine, a toxic by-product of radical S-adenosylmethionine (SAM) enzymes, into 5-deoxyribose and adenine. Thus, is required for in vivo function of the radical SAM enzymes biotin synthase and lipoic acid synthase, that are inhibited by 5'-deoxyadenosine accumulation. This Shigella boydii serotype 4 (strain Sb227) protein is 5'-methylthioadenosine/S-adenosylhomocysteine nucleosidase.